The following is a 477-amino-acid chain: Probable cytosolic Fe-S cluster assembly factor GK14772 (477 aa).

[4Fe-4S] cluster is bound by residues Cys23, Cys69, Cys72, Cys75, Cys188, Cys244, Cys396, and Cys400.

It belongs to the NARF family.

Its function is as follows. Component of the cytosolic iron-sulfur (Fe/S) protein assembly machinery. Required for maturation of extramitochondrial Fe/S proteins. The polypeptide is Probable cytosolic Fe-S cluster assembly factor GK14772 (Drosophila willistoni (Fruit fly)).